A 127-amino-acid polypeptide reads, in one-letter code: Ribosome-binding factor A (127 aa).

It belongs to the RbfA family. Monomer. Binds 30S ribosomal subunits, but not 50S ribosomal subunits or 70S ribosomes.

The protein localises to the cytoplasm. In terms of biological role, one of several proteins that assist in the late maturation steps of the functional core of the 30S ribosomal subunit. Associates with free 30S ribosomal subunits (but not with 30S subunits that are part of 70S ribosomes or polysomes). Required for efficient processing of 16S rRNA. May interact with the 5'-terminal helix region of 16S rRNA. The protein is Ribosome-binding factor A of Glaesserella parasuis serovar 5 (strain SH0165) (Haemophilus parasuis).